The primary structure comprises 473 residues: Venom prothrombin activator vestarin-D1 (473 aa).

Positions 1 to 20 are cleaved as a signal peptide; it reads MAPQLLLCLIQTFLWSLPEA. The propeptide occupies 21 to 40; sequence ESNVFLKSNVANRFLQRTKR. Residues 41–86 form the Gla domain; the sequence is ANSGFEEIYPANFERECVEERCSKEEAREVFEDDEKTEAFWTVYVD. A 4-carboxyglutamate mark is found at Glu46, Glu47, Glu54, Glu56, Glu59, Glu60, Glu65, Glu66, Glu69, Glu72, and Glu75. Residues Cys57 and Cys62 are joined by a disulfide bond. The region spanning 86–122 is the EGF-like 1; calcium-binding domain; sequence DGDQCLSNPCHYGGTCKDGIGSYTCTCLAGYEGKNCE. 10 disulfides stabilise this stretch: Cys90/Cys101, Cys95/Cys110, Cys112/Cys121, Cys129/Cys140, Cys136/Cys149, Cys151/Cys164, Cys172/Cys335, Cys235/Cys240, Cys383/Cys397, and Cys408/Cys436. Ser92 carries an O-linked (Hex...) serine glycan. The 36-residue stretch at 129–164 folds into the EGF-like 2 domain; sequence CRVDNGNCWHFCKPVQNDTQCSCAEGYRLGDNGFSC. The propeptide at 182-228 is activation peptide; that stretch reads REASLPDFQTDFSDDYDAIDENNLIETVQSQSATLLKKSDNPNPDIR. The Peptidase S1 domain occupies 229–460; that stretch reads IVNGLDCKLG…FLPWIKTIMR (232 aa). His270 functions as the Charge relay system in the catalytic mechanism. A glycan (N-linked (GlcNAc...) asparagine) is linked at Asn273. The active-site Charge relay system is Asp315. The Charge relay system role is filled by Ser412.

The protein belongs to the peptidase S1 family. Snake venom subfamily. As to quaternary structure, heterodimer of a light chain and a heavy chain; disulfide-linked. Post-translationally, the vitamin K-dependent, enzymatic carboxylation of some glutamate residues allows the modified protein to bind calcium. In terms of tissue distribution, expressed by the venom gland.

It is found in the secreted. The catalysed reaction is Selective cleavage of Arg-|-Thr and then Arg-|-Ile bonds in prothrombin to form thrombin.. Snake prothrombin activator that attacks the hemostatic system of prey. This protein is functionally similar to blood coagulation factor Xa. This is Venom prothrombin activator vestarin-D1 from Demansia vestigiata (Lesser black whip snake).